The primary structure comprises 343 residues: N-acetyl-gamma-glutamyl-phosphate reductase (343 aa).

C150 is a catalytic residue.

It belongs to the NAGSA dehydrogenase family. Type 1 subfamily.

The protein localises to the cytoplasm. It carries out the reaction N-acetyl-L-glutamate 5-semialdehyde + phosphate + NADP(+) = N-acetyl-L-glutamyl 5-phosphate + NADPH + H(+). Its pathway is amino-acid biosynthesis; L-arginine biosynthesis; N(2)-acetyl-L-ornithine from L-glutamate: step 3/4. Catalyzes the NADPH-dependent reduction of N-acetyl-5-glutamyl phosphate to yield N-acetyl-L-glutamate 5-semialdehyde. This is N-acetyl-gamma-glutamyl-phosphate reductase from Nitrosococcus oceani (strain ATCC 19707 / BCRC 17464 / JCM 30415 / NCIMB 11848 / C-107).